We begin with the raw amino-acid sequence, 105 residues long: Large ribosomal subunit protein uL24 (105 aa).

Residues 40–61 (RIKKHTPQSANERGASSGGIVT) are disordered.

This sequence belongs to the universal ribosomal protein uL24 family. Part of the 50S ribosomal subunit.

Its function is as follows. One of two assembly initiator proteins, it binds directly to the 5'-end of the 23S rRNA, where it nucleates assembly of the 50S subunit. Functionally, one of the proteins that surrounds the polypeptide exit tunnel on the outside of the subunit. The protein is Large ribosomal subunit protein uL24 of Mycobacteroides abscessus (strain ATCC 19977 / DSM 44196 / CCUG 20993 / CIP 104536 / JCM 13569 / NCTC 13031 / TMC 1543 / L948) (Mycobacterium abscessus).